The sequence spans 136 residues: Protein NrdI (136 aa).

It belongs to the NrdI family.

In terms of biological role, probably involved in ribonucleotide reductase function. In Shigella dysenteriae serotype 1 (strain Sd197), this protein is Protein NrdI.